The primary structure comprises 358 residues: MLKTPLYESHMAANAKMVDFSGWSMPINYGSQIQEHNNVREDCGIFDVSHMLAVDIQGSEAEKFLRYLLANDVAKLQENKAQYGCMLNHDAGIVDDLITYKVTDEHFRIVVNAGNRESDVAWFNQNAQNFDVAITPQTDLAIVAVQGPKAVAVIKRVVTKEIATEIEALLPFSFKFFSKWMVARTGYTGEDGFEVILPATQVKKFWDSLLENGAQPAGLGARDTLRLEAGMHLYGADMDTSTTPLERGLGWSVDLSDEHRDFIGKKAYFAKKAQGVDTKWVGVVLKTKGVLRAGQEIDFDNGEKGYITSGSFSPTLKVAIGLAYVPKQADNPVVNIRGKELEVELVKPKFVKNGKSLI.

It belongs to the GcvT family. The glycine cleavage system is composed of four proteins: P, T, L and H.

The catalysed reaction is N(6)-[(R)-S(8)-aminomethyldihydrolipoyl]-L-lysyl-[protein] + (6S)-5,6,7,8-tetrahydrofolate = N(6)-[(R)-dihydrolipoyl]-L-lysyl-[protein] + (6R)-5,10-methylene-5,6,7,8-tetrahydrofolate + NH4(+). Functionally, the glycine cleavage system catalyzes the degradation of glycine. The protein is Aminomethyltransferase of Francisella tularensis subsp. tularensis (strain FSC 198).